The primary structure comprises 71 residues: Non-disulfide-bridged peptide 5.5 (71 aa).

A signal peptide spans methionine 1–alanine 23. Residue leucine 36 is modified to Leucine amide. Residues aspartate 40 to arginine 71 constitute a propeptide that is removed on maturation.

It belongs to the non-disulfide-bridged peptide (NDBP) superfamily. Short antimicrobial peptide (group 4) family. In terms of tissue distribution, expressed by the venom gland.

The protein localises to the secreted. Its subcellular location is the target cell membrane. Antimicrobial peptide. Is active on Mycobacterium abscessus subsp. massiliense (MBC=200 uM), a rapidly growing and emerging pathogen associated with healthcare infections. Also shows antifungal activities. Has a weak hemolytic activity on human erythrocytes (10% at 610 uM), indicating a low toxicity (therapeutic index (TI)=3.05). In addition, treatment of infected macrophages reduces the bacterial load. In vivo, treatment of M.abscessus-infected mice causes a decrease in the bacterial load in the lungs and liver. The sequence is that of Non-disulfide-bridged peptide 5.5 from Hoffmannihadrurus gertschi (Scorpion).